Consider the following 333-residue polypeptide: Probable G-protein coupled receptor 174 (333 aa).

The Extracellular segment spans residues 1–27 (MPANYTCTRPDGDNTDFRYFIYAVTYT). A glycan (N-linked (GlcNAc...) asparagine) is linked at asparagine 4. The helical transmembrane segment at 28 to 48 (VILVPGLIGNILALWVFYGYM) threads the bilayer. Topologically, residues 49–53 (KETKR) are cytoplasmic. Residues 54-74 (AVIFMINLAIADLLQVLSLPL) traverse the membrane as a helical segment. The Extracellular segment spans residues 75-91 (RIFYYLNHDWPFGPGLC). Cysteine 91 and cysteine 168 are disulfide-bonded. Residues 92–112 (MFCFYLKYVNMYASIYFLVCI) traverse the membrane as a helical segment. Topologically, residues 113-134 (SVRRFWFLMYPFRFHDCKQKYD) are cytoplasmic. Residues 135-155 (LYISIAGWLIICLACVLFPLL) form a helical membrane-spanning segment. At 156–182 (RTSDDTSGNRTKCFVDLPTRNVNLAQS) the chain is on the extracellular side. N-linked (GlcNAc...) asparagine glycosylation occurs at asparagine 164. The helical transmembrane segment at 183-203 (VVMMTIGELIGFVTPLLIVLY) threads the bilayer. At 204 to 231 (CTWKTVLSLQDKYPMAQDLGEKQKALKM) the chain is on the cytoplasmic side. A helical transmembrane segment spans residues 232-252 (ILTCAGVFLICFAPYHFSFPL). The Extracellular segment spans residues 253-269 (DFLVKSNEIKSCLARRV). The helical transmembrane segment at 270–290 (ILIFHSVALCLASLNSCLDPV) threads the bilayer. The Cytoplasmic segment spans residues 291 to 333 (IYYFSTNEFRRRLSRQDLHDSIQLHAKSFVSNHTASTMTPELC).

Belongs to the G-protein coupled receptor 1 family. In terms of assembly, interacts with GNA13. Interacts with CCL21.

It localises to the cell membrane. G-protein-coupled receptor of lysophosphatidylserine (LysoPS) that plays different roles in immune response. Plays a negative role in regulatory T-cell accumulation and homeostasis. Under inflammatory conditions where LysoPS production increases, contributes to the down-regulation of regulatory T-cell activity to favor effector response. Mediates the suppression of IL-2 production in activated T-lymphocytes leading to inhibition of growth, proliferation and differentiation of T-cells. Mechanistically, acts via G(s)-containing heterotrimeric G proteins to trigger elevated cyclic AMP levels and protein kinase A/PKA activity, which may in turn act to antagonize proximal TCR signaling. Plays an important role in the initial period of sepsis through the regulation of macrophage polarization and pro- and anti-inflammatory cytokine secretions. Upon testosterone treatment, acts as a receptor for CCL21 and subsequently triggers through G(q)-alpha and G(12)/G(13) proteins a calcium flux leading to chemotactic effects on activated B-cells. Signals via GNA13 and PKA to promote CD86 up-regulation by follicular B-cells. This chain is Probable G-protein coupled receptor 174 (GPR174), found in Homo sapiens (Human).